The sequence spans 1857 residues: Chitin synthase Y (1857 aa).

The tract at residues 1–22 is disordered; it reads MVGPSPAGTVPSHAQSSLPSLP. The region spanning 1-788 is the Myosin motor domain; it reads MVGPSPAGTV…CWADLAKVGE (788 aa). 102 to 109 serves as a coordination point for ATP; that stretch reads GESGAGKT. The tract at residues 601–653 is disordered; sequence SSKPLRMPSMARRKASPASRLTFDAPTAEEPEDNESYGGSTAKSSGRRKSAMS. Residue Asn-634 is glycosylated (N-linked (GlcNAc...) asparagine). The interval 668-692 is actin-binding; it reads LEIVNKCLSSPSLNPYFIFCLKPND. 2 helical membrane passes run 898 to 918 and 937 to 957; these read WMAI…RLFG and LIIW…PGLV. The Cytochrome b5 heme-binding domain occupies 961–1020; sequence QHVYSAAELESHNGKNGHDSYIAIRGVVFDLDKFMPRHYPDIVPQSSLKKYAGMDATGLF. N-linked (GlcNAc...) asparagine glycosylation is found at Asn-1047 and Asn-1072. Residues 1209-1229 form a helical membrane-spanning segment; sequence FILAISILICAVVIFKFAAAL. A glycan (N-linked (GlcNAc...) asparagine) is linked at Asn-1572. The next 3 helical transmembrane spans lie at 1603–1623, 1630–1650, and 1657–1677; these read LLST…IVWL, IPWT…LIFI, and MIGW…ALPF. Positions 1799-1854 constitute a DEK-C domain; that stretch reads LPSDDAILAEIREILRTADLMTVTKKSIKQELERRFGVNLDAKRPYINSATEAVLS.

The protein in the N-terminal section; belongs to the TRAFAC class myosin-kinesin ATPase superfamily. Myosin family. In the C-terminal section; belongs to the chitin synthase family. Class V subfamily.

Its subcellular location is the cell membrane. The protein resides in the cell septum. It is found in the cell tip. It catalyses the reaction [(1-&gt;4)-N-acetyl-beta-D-glucosaminyl](n) + UDP-N-acetyl-alpha-D-glucosamine = [(1-&gt;4)-N-acetyl-beta-D-glucosaminyl](n+1) + UDP + H(+). Its function is as follows. Polymerizes chitin, a structural polymer of the cell wall and septum, by transferring the sugar moiety of UDP-GlcNAc to the non-reducing end of the growing chitin polymer. Specifically involved in hyphal elongation and new cell wall formation. The sequence is that of Chitin synthase Y from Aspergillus oryzae (strain ATCC 42149 / RIB 40) (Yellow koji mold).